A 70-amino-acid chain; its full sequence is Mu-conotoxin PnIVB (70 aa).

The N-terminal stretch at 1-20 (MMSKLGVLLIICLLLCPLTA) is a signal peptide. A propeptide spanning residues 21–51 (VPQDGDQPADQPAERMQDDISSEHHPFFDPV) is cleaved from the precursor.

In terms of processing, contains 3 disulfide bonds. They are not added, since framework IV presents two different connectivities (I-V, II-III, IV-VI and I-III, II-V, IV-VI). In terms of tissue distribution, expressed by the venom duct.

Its subcellular location is the secreted. In terms of biological role, mu-conotoxins block voltage-gated sodium channels (Nav). Blocks reversibly sodium channels in molluskan neurons, but has no effect on sodium currents in bovine chromaffin cells or in rat brain synaptosomes. Induces paralysis in bivalve mollusks (Mytilus). No effect are observed on fish (Gambusia) and fly larvae (Sarcophaga). Is approximately 6 times more potent than PnIVA in blockade of the sodium current in Lymnaea neurons. In Conus pennaceus (Feathered cone), this protein is Mu-conotoxin PnIVB.